The chain runs to 173 residues: Protein tyrosine phosphatase type IVA 3 (173 aa).

Residues 8 to 161 (APVEVSYKNM…YRPKQRLRFK (154 aa)) form the Tyrosine-protein phosphatase domain. Cysteines 49 and 104 form a disulfide. Residue Asp72 is the Proton donor of the active site. Cys104 (phosphocysteine intermediate) is an active-site residue. Arg110 contacts substrate. A Cysteine methyl ester modification is found at Cys170. Residue Cys170 is the site of S-farnesyl cysteine attachment. A propeptide spans 171–173 (CIM) (removed in mature form).

This sequence belongs to the protein-tyrosine phosphatase family. In terms of assembly, interacts with tubulin. In terms of processing, farnesylated. Farnesylation is required for membrane targeting. Unfarnesylated forms are shifted into the nucleus.

It localises to the cell membrane. It is found in the early endosome. The catalysed reaction is O-phospho-L-tyrosyl-[protein] + H2O = L-tyrosyl-[protein] + phosphate. With respect to regulation, inhibited by sodium orthovanadate and peroxovanadium compounds, and by pentamidine. Functionally, protein tyrosine phosphatase which stimulates progression from G1 into S phase during mitosis. Enhances cell proliferation, cell motility and invasive activity, and promotes cancer metastasis. May be involved in the progression of cardiac hypertrophy by inhibiting intracellular calcium mobilization in response to angiotensin II. This chain is Protein tyrosine phosphatase type IVA 3 (PTP4A3), found in Bos taurus (Bovine).